The sequence spans 1110 residues: Sex-determining transformer protein 1 (1110 aa).

Disordered stretches follow at residues 1-103 (MMAP…AQQS) and 170-202 (TING…DSDM). Basic and acidic residues predominate over residues 44–61 (GSEDKQPGGGDVKTENDP). A compositionally biased stretch (polar residues) spans 65–90 (GLGSATSNFIQSSVPPSHQTLSNPLQ). The segment covering 188 to 201 (NNAANSSNSGNDSD) has biased composition (low complexity). The C2H2-type 1; low DNA-binding affinity zinc-finger motif lies at 208-233 (LTCRWKSCNSSFQTLKALVDHVQESH). A C2H2-type 2; low DNA-binding affinity zinc finger spans residues 244–270 (WRCEWEGCDRNETFKALYMLIVHVRRH). 3 consecutive C2H2-type zinc fingers follow at residues 276-300 (NKCE…RRTH), 306-331 (YKCE…NRTH), and 337-362 (YSCQ…KAVH). Disordered stretches follow at residues 363 to 397 (GDDE…AMSH), 594 to 682 (EVEP…GSGE), 875 to 895 (RNVG…DQDR), and 1057 to 1110 (QEQP…RHQF). The span at 597-606 (PLQQQQQQEP) shows a compositional bias: low complexity. Gly residues predominate over residues 641-652 (GNNGDGGFGGSG). Residues 669 to 678 (PISQNGSRAS) are compositionally biased toward polar residues. The span at 886–895 (RNNRGHDQDR) shows a compositional bias: basic and acidic residues. Over residues 1057–1066 (QEQPTSSFSS) the composition is skewed to polar residues. Residues 1076-1086 (ALPPPPPPPAP) show a composition bias toward pro residues. Residues 1092–1103 (SADNKDDSENIP) show a composition bias toward basic and acidic residues.

This sequence belongs to the GLI C2H2-type zinc-finger protein family. Interacts with the MX regulatory domain of tra-2. Expressed in intestine and gonads (at protein level).

Its subcellular location is the cytoplasm. It is found in the nucleus. In terms of biological role, plays a major role in controlling sexual phenotype. Terminal global regulator in a well-characterized cascade of sex-determining genes. Promotes female development. Interacts with tra-2 to promote spermatogenesis. Promotes spermatogenesis through the Tip60 HAT complex and by regulating the expression of genes, such as fog-3, required for male development. Association with chromatin and at the fog-3 promoter requires wdr-5.1, and may also require wdr-5.2. With trr-1, activates the fog-3 gene to determine sperm/oocyte cell fate. In hermaphrodites, binds to an intronic regulatory site in the ceh-30 gene, preventing ceh-30 transcription and thereby preventing survival of the CEM (cephalic male) sensory neurons. Represses the expression of the transcription factor dmd-3 in hermaphrodites to govern the timing and extent of male tail tip morphogenesis. Plays a role in controlling the sex-specific differentiation of PHC sensory neurons and represses the development of male-specific morphological features. In Caenorhabditis elegans, this protein is Sex-determining transformer protein 1.